Consider the following 153-residue polypeptide: Superoxide dismutase [Cu-Zn] (153 aa).

Cu cation is bound by residues His-45, His-47, and His-62. An intrachain disulfide couples Cys-56 to Cys-145. Residues His-62, His-70, His-79, and Asp-82 each contribute to the Zn(2+) site. Cu cation is bound at residue His-119.

Belongs to the Cu-Zn superoxide dismutase family. Homodimer. Requires Cu cation as cofactor. Zn(2+) serves as cofactor.

The protein localises to the cytoplasm. It carries out the reaction 2 superoxide + 2 H(+) = H2O2 + O2. Functionally, destroys radicals which are normally produced within the cells and which are toxic to biological systems. The chain is Superoxide dismutase [Cu-Zn] (SOD) from Schistosoma mansoni (Blood fluke).